Reading from the N-terminus, the 86-residue chain is Insulin-related peptide 2 (86 aa).

Residues 1 to 19 (MKFYIVFALILACAACVSS) form the signal peptide. Positions 20–43 (QEGTNFYCGRQLSRTLALVCWGAE) are excised as a propeptide. Arg63 carries the arginine amide modification. Positions 67–86 (GPVDECCLKPCSIEEMLTYC) are excised as a propeptide.

The protein belongs to the insulin family. In terms of tissue distribution, DAGWWVPPQSARALGGGR-amide: Expressed in corpora cardiaca (CC), corpora allata (CA), antennal lobe (AL) and gnathal ganglion (GNG) (at protein level). Expression in CC and CA detected in most animals, in AL in some animals and in GNG in few animals (at protein level).

Its subcellular location is the secreted. This Agrotis ipsilon (Black cutworm moth) protein is Insulin-related peptide 2.